The primary structure comprises 1170 residues: Thrombospondin-1 (1170 aa).

The N-terminal stretch at 1–18 (MELLRGLGVLFLLHMCGS) is a signal peptide. The interval 47 to 95 (RLVKGQDLSSPAFRIENANLIPAVPDDKFQDLLDAVWADKGFIFLASLR) is heparin-binding. Positions 56 to 270 (SPAFRIENAN…HKTKDLQAIC (215 aa)) constitute a Laminin G-like domain. Cysteines 171 and 232 form a disulfide. N-linked (GlcNAc...) asparagine glycosylation is found at N248 and N360. The VWFC domain maps to 316 to 373 (PLCFHNGVQYKNNEEWTVDSCTECHCQNSVTICKKVSCPIMPCSNATVPDGECCPRCW). TSP type-1 domains are found at residues 379–429 (DDGW…QECD), 435–490 (DGGW…DACP), and 492–547 (NGGW…QDCP). C-linked (Man) tryptophan glycosylation is present at W385. 3 disulfides stabilise this stretch: C391/C423, C395/C428, and C406/C413. C-linked (Man) tryptophan glycosylation is found at W438 and W441. 3 disulfide bridges follow: C447-C484, C451-C489, and C462-C474. T450 carries an O-linked (Fuc...) threonine glycan. A glycan (C-linked (Man) tryptophan) is linked at W498. Disulfide bonds link C504/C541, C508/C546, C519/C531, C551/C562, C556/C572, C575/C586, C592/C608, C599/C617, C620/C644, C650/C663, C657/C676, C678/C689, C705/C713, C718/C738, C754/C774, C777/C797, C813/C833, C836/C856, C874/C894, C910/C930, and C946/C1167. Residue T507 is glycosylated (O-linked (Fuc...) threonine). An involved in retention in extracellular matrix (ECM); involved in trimer formation region spans residues 531-1152 (CVGDVTENQV…YAGGRLGLFV (622 aa)). The region spanning 547 to 587 (PIDGCLSNPCFAGAKCTSYPDGSWKCGACPPGYSGNGIQCK) is the EGF-like 1 domain. O-linked (Xyl) serine glycosylation occurs at S553. Positions 646 to 690 (PRNPCTDGTHDCNKNAKCNYLGHYSDPMYRCECKPGYAGNGIICG) constitute an EGF-like 2 domain. 8 TSP type-3 repeats span residues 691–726 (EDTD…NSGQ), 727–762 (EDYD…NPAQ), 763–785 (YDYD…NPDQ), 786–821 (ADTD…NVDQ), 822–844 (RDTD…NPDQ), 845–882 (LDSD…NANQ), 883–918 (ADHD…NPDQ), and 919–954 (KDSD…DISE). The N-linked (GlcNAc...) asparagine glycan is linked to N708. A disordered region spans residues 840–934 (HNPDQLDSDS…GRGDACKDDF (95 aa)). Composition is skewed to basic and acidic residues over residues 883–894 (ADHDKDGKGDAC) and 917–934 (DQKD…KDDF). Residues 926-928 (RGD) carry the Cell attachment site motif. The 213-residue stretch at 958-1170 (RRFQMIPLDP…SDMKYECRDS (213 aa)) folds into the TSP C-terminal domain. N1067 carries N-linked (GlcNAc...) asparagine glycosylation.

This sequence belongs to the thrombospondin family. As to quaternary structure, homotrimer; disulfide-linked. Can bind to fibrinogen, fibronectin, laminin, type V collagen and integrins alpha-V/beta-1, alpha-V/beta-3 and alpha-IIb/beta-3. Binds heparin. Interacts (via the C-terminal domain) with CD47. Interacts (via the TSP type I repeats) with CD36; the interaction conveys an antiangiogenic effect. Interacts (via the TSP type I repeats) with HRG; the interaction blocks the antiangiogenic effect of THBS1 with CD36. Interacts with ATF6 (via lumenal domain). Interacts with FN1; this interaction is enhanced by TNFAIP6, which may act as a bridging molecule between FN1 and THBS1. Interacts with SIRPA; the interaction stimulates phosphorylation of SIRPA.

The protein resides in the secreted. It localises to the cell surface. It is found in the extracellular space. The protein localises to the extracellular matrix. Its subcellular location is the endoplasmic reticulum. The protein resides in the sarcoplasmic reticulum. Its function is as follows. Adhesive glycoprotein that mediates cell-to-cell and cell-to-matrix interactions. Multifunctional, involved in inflammation, angiogenesis, wound healing, reactive oxygen species (ROS) signaling, nitrous oxide (NO) signaling, apoptosis, senescence, aging, cellular self-renewal, stemness, and cardiovascular and metabolic homeostasis. Negatively modulates dendritic cell activation and cytokine release, as part of an autocrine feedback loop, contributing to the resolution of inflammation and immune homeostasis. Ligand for receptor CD47. Modulates nitrous oxide (NO) signaling via CD47, hence playing a role as a pressor agent, supporting blood pressure. Plays a role in endothelial cell senescence, acting via CD47, by increasing the abundance and activation of NADPH oxidase NOX1, and so generating excess ROS. Inhibits stem cell self-renewal, acting via CD47 signaling, probably by regulation of the stem cell transcription factors POU5F1/OCT4, SOX2, MYC/c-Myc and KLF4. Negatively modulates wound healing, acting via CD47. Ligand for receptor CD36. Involved in inducing apoptosis in podocytes in response to elevated free fatty acids, acting via CD36. Plays a role in suppressing angiogenesis, acting, depending on context, via CD36 or CD47. Promotes cellular senescence in a TP53-CDKN1A-RB1 signaling-dependent manner. Ligand for immunoglobulin-like cell surface receptor SIRPA. Involved in ROS signaling in non-phagocytic cells, stimulating NADPH oxidase-derived ROS production, acting via interaction with SIRPA. Plays a role in metabolic dysfunction in diet-induced obesity, perhaps acting by exacerbating adipose inflammatory activity; its effects may be mediated, at least in part, through enhanced adipocyte proliferation. Plays a role in ER stress response, via its interaction with the activating transcription factor 6 alpha (ATF6) which produces adaptive ER stress response factors. May be involved in age-related conditions, including metabolic dysregulation, during normal aging. The polypeptide is Thrombospondin-1 (Thbs1) (Mus musculus (Mouse)).